A 381-amino-acid chain; its full sequence is tRNA pseudouridine synthase D (381 aa).

Asp81 acts as the Nucleophile in catalysis. Positions Gly160–Val335 constitute a TRUD domain.

The protein belongs to the pseudouridine synthase TruD family.

It carries out the reaction uridine(13) in tRNA = pseudouridine(13) in tRNA. Functionally, responsible for synthesis of pseudouridine from uracil-13 in transfer RNAs. This chain is tRNA pseudouridine synthase D, found in Helicobacter pylori (strain Shi470).